The sequence spans 100 residues: NADH-quinone oxidoreductase subunit K (100 aa).

Helical transmembrane passes span 4-24, 28-48, and 60-80; these read LQHG…GLLI, LLFM…AFVV, and VMYI…LALL.

Belongs to the complex I subunit 4L family. NDH-1 is composed of 13 different subunits. Subunits NuoA, H, J, K, L, M, N constitute the membrane sector of the complex.

It is found in the cell inner membrane. The catalysed reaction is a quinone + NADH + 5 H(+)(in) = a quinol + NAD(+) + 4 H(+)(out). In terms of biological role, NDH-1 shuttles electrons from NADH, via FMN and iron-sulfur (Fe-S) centers, to quinones in the respiratory chain. The immediate electron acceptor for the enzyme in this species is believed to be ubiquinone. Couples the redox reaction to proton translocation (for every two electrons transferred, four hydrogen ions are translocated across the cytoplasmic membrane), and thus conserves the redox energy in a proton gradient. The protein is NADH-quinone oxidoreductase subunit K of Yersinia pseudotuberculosis serotype O:1b (strain IP 31758).